A 290-amino-acid polypeptide reads, in one-letter code: UBX domain-containing protein 1-B (290 aa).

Positions 1-42 (MADCSALESLIEMGFSPSRAEKALSATGNQGIEPAMDWLVEH) constitute a UBA domain. Residues 49-210 (KEPSVVIPED…VQEPPTKKEY (162 aa)) are disordered. Basic and acidic residues-rich tracts occupy residues 80 to 117 (PLTE…EQEK) and 132 to 172 (RMQE…DRAR). Positions 81 to 171 (LTEEEKEKQT…KIARDKADRA (91 aa)) form a coiled coil. Over residues 185-201 (PAETSVPATAPSPSSPV) the composition is skewed to low complexity. Positions 208–287 (KEYDQCRIQV…GLVPTAVLIV (80 aa)) constitute a UBX domain.

The protein localises to the cytoplasm. In terms of biological role, component of a complex required to couple deglycosylation and proteasome-mediated degradation of misfolded proteins in the endoplasmic reticulum that are retrotranslocated in the cytosol. Involved in ubiquitin-proteasome systems. This Xenopus laevis (African clawed frog) protein is UBX domain-containing protein 1-B (ubxn1-b).